A 223-amino-acid chain; its full sequence is N-terminal Xaa-Pro-Lys N-methyltransferase 1-B (223 aa).

S-adenosyl-L-methionine-binding positions include G69, R74, D91–T93, L119–Q120, and Q135.

It belongs to the methyltransferase superfamily. NTM1 family.

It is found in the nucleus. The catalysed reaction is N-terminal L-alanyl-L-prolyl-L-lysyl-[protein] + 3 S-adenosyl-L-methionine = N-terminal N,N,N-trimethyl-L-alanyl-L-prolyl-L-lysyl-[protein] + 3 S-adenosyl-L-homocysteine + 3 H(+). It carries out the reaction N-terminal L-seryl-L-prolyl-L-lysyl-[protein] + 3 S-adenosyl-L-methionine = N-terminal N,N,N-trimethyl-L-seryl-L-prolyl-L-lysyl-[protein] + 3 S-adenosyl-L-homocysteine + 3 H(+). The enzyme catalyses N-terminal L-prolyl-L-prolyl-L-lysyl-[protein] + 2 S-adenosyl-L-methionine = N-terminal N,N-dimethyl-L-prolyl-L-prolyl-L-lysyl-[protein] + 2 S-adenosyl-L-homocysteine + 2 H(+). Distributive alpha-N-methyltransferase that methylates the N-terminus of target proteins containing the N-terminal motif [Ala/Gly/Pro/Ser]-Pro-Lys when the initiator Met is cleaved. Specifically catalyzes mono-, di- or tri-methylation of the exposed alpha-amino group of the Ala, Gly or Ser residue in the [Ala/Gly/Ser]-Pro-Lys motif and mono- or di-methylation of Pro in the Pro-Pro-Lys motif. Required during mitosis for normal bipolar spindle formation and chromosome segregation via its action on target proteins. This is N-terminal Xaa-Pro-Lys N-methyltransferase 1-B (ntmt1-b) from Xenopus laevis (African clawed frog).